The primary structure comprises 136 residues: Nucleoside diphosphate kinase (136 aa).

Lysine 10, phenylalanine 58, arginine 86, threonine 92, arginine 104, and asparagine 114 together coordinate ATP. Histidine 117 functions as the Pros-phosphohistidine intermediate in the catalytic mechanism.

It belongs to the NDK family. As to quaternary structure, homotetramer. It depends on Mg(2+) as a cofactor.

The protein resides in the cytoplasm. The enzyme catalyses a 2'-deoxyribonucleoside 5'-diphosphate + ATP = a 2'-deoxyribonucleoside 5'-triphosphate + ADP. The catalysed reaction is a ribonucleoside 5'-diphosphate + ATP = a ribonucleoside 5'-triphosphate + ADP. Functionally, major role in the synthesis of nucleoside triphosphates other than ATP. The ATP gamma phosphate is transferred to the NDP beta phosphate via a ping-pong mechanism, using a phosphorylated active-site intermediate. This is Nucleoside diphosphate kinase from Mycobacterium leprae (strain TN).